The chain runs to 664 residues: Glycine--tRNA ligase beta subunit (664 aa).

Belongs to the class-II aminoacyl-tRNA synthetase family. In terms of assembly, tetramer of two alpha and two beta subunits.

The protein resides in the cytoplasm. The enzyme catalyses tRNA(Gly) + glycine + ATP = glycyl-tRNA(Gly) + AMP + diphosphate. The sequence is that of Glycine--tRNA ligase beta subunit from Rickettsia felis (strain ATCC VR-1525 / URRWXCal2) (Rickettsia azadi).